The following is a 358-amino-acid chain: Peroxidase 54 (358 aa).

Positions 1–31 (MAVTSSSSTCDGFFIISLIVIVSSLFGTSSA) are cleaved as a signal peptide. Pyrrolidone carboxylic acid is present on glutamine 32. Asparagine 34 and asparagine 44 each carry an N-linked (GlcNAc...) asparagine glycan. Disulfide bonds link cysteine 42-cysteine 122, cysteine 75-cysteine 80, cysteine 128-cysteine 330, and cysteine 207-cysteine 239. The active-site Proton acceptor is the histidine 73. Ca(2+)-binding residues include aspartate 74, valine 77, glycine 79, aspartate 81, and serine 83. N-linked (GlcNAc...) asparagine glycosylation is found at asparagine 103, asparagine 161, and asparagine 166. Proline 170 contacts substrate. A glycan (N-linked (GlcNAc...) asparagine) is linked at asparagine 178. Histidine 200 is a binding site for heme b. Threonine 201 contacts Ca(2+). N-linked (GlcNAc...) asparagine glycosylation is found at asparagine 218, asparagine 228, and asparagine 242. Ca(2+) contacts are provided by aspartate 252, threonine 255, and aspartate 260. An N-linked (GlcNAc...) asparagine glycan is attached at asparagine 298.

The protein belongs to the peroxidase family. Classical plant (class III) peroxidase subfamily. Heme b is required as a cofactor. Ca(2+) serves as cofactor.

It localises to the secreted. The protein resides in the vacuole. The catalysed reaction is 2 a phenolic donor + H2O2 = 2 a phenolic radical donor + 2 H2O. In terms of biological role, removal of H(2)O(2), oxidation of toxic reductants, biosynthesis and degradation of lignin, suberization, auxin catabolism, response to environmental stresses such as wounding, pathogen attack and oxidative stress. These functions might be dependent on each isozyme/isoform in each plant tissue. In Arabidopsis thaliana (Mouse-ear cress), this protein is Peroxidase 54 (PER54).